Reading from the N-terminus, the 147-residue chain is uncharacterized protein (147 aa).

The disordered stretch occupies residues 29 to 147 (PYGNNSVHQG…GHHHGHHHKH (119 aa)). 2 stretches are compositionally biased toward polar residues: residues 34–45 (SVHQGQPHTDQN) and 60–73 (PQAQYGNAGQNQPS). The span at 75–92 (PFGGAGYTGPTAGTGFGN) shows a compositional bias: gly residues. Over residues 122–147 (DGHHKKHGRKEHDHHHGHHHGHHHKH) the composition is skewed to basic residues.

This is an uncharacterized protein from Caenorhabditis elegans.